The sequence spans 114 residues: Large ribosomal subunit protein bL20 (114 aa).

Belongs to the bacterial ribosomal protein bL20 family.

Functionally, binds directly to 23S ribosomal RNA and is necessary for the in vitro assembly process of the 50S ribosomal subunit. It is not involved in the protein synthesizing functions of that subunit. This chain is Large ribosomal subunit protein bL20, found in Parabacteroides distasonis (strain ATCC 8503 / DSM 20701 / CIP 104284 / JCM 5825 / NCTC 11152).